A 288-amino-acid polypeptide reads, in one-letter code: Ras-like protein 1 (288 aa).

A GTP-binding site is contributed by 11–18; sequence GGGGVGKS. The Effector region signature appears at 33–41; it reads YDPTIEDSY. GTP contacts are provided by residues 58–62 and 117–120; these read DTAGQ and NKCD. Residues 176–288 are disordered; that stretch reads EKQQQQQQQQ…KSKNGCCVIV (113 aa). Low complexity-rich tracts occupy residues 178-216 and 246-281; these read QQQQ…NNNN and PNQS…SKSK. C284 carries the S-palmitoyl cysteine lipid modification. Position 285 is a cysteine methyl ester (C285). C285 carries S-farnesyl cysteine lipidation. The propeptide at 286-288 is removed in mature form; it reads VIV.

The protein belongs to the small GTPase superfamily. Ras family.

Its subcellular location is the cell membrane. It carries out the reaction GTP + H2O = GDP + phosphate + H(+). With respect to regulation, alternates between an inactive form bound to GDP and an active form bound to GTP. Activated by a guanine nucleotide-exchange factor (GEF) and inactivated by a GTPase-activating protein (GAP). In terms of biological role, required for the regulation of both a MAP kinase signaling pathway and a cAMP signaling pathway. The activation of these pathways contributes to the pathogenicity of the cells through the induction of the morphological transition from the yeast to the polarized filamentous form. This is Ras-like protein 1 (RAS1) from Candida albicans (strain WO-1) (Yeast).